Consider the following 559-residue polypeptide: Tissue-type plasminogen activator (559 aa).

The signal sequence occupies residues 1 to 17 (MKGELLCVLLLCGVAFT). Positions 18 to 29 (LPDQGIHRRFRR) are excised as a propeptide. Positions 30–32 (GAR) are cleaved as a propeptide — removed by plasmin. The 43-residue stretch at 36–78 (ATCRDEQTQTTYQQHQSWLRPMLRGNRVEYCRCNSGLAQCHSV) folds into the Fibronectin type-I domain. 17 disulfide bridges follow: Cys-38/Cys-68, Cys-66/Cys-75, Cys-83/Cys-94, Cys-88/Cys-105, Cys-107/Cys-116, Cys-124/Cys-205, Cys-145/Cys-187, Cys-176/Cys-200, Cys-213/Cys-294, Cys-234/Cys-276, Cys-265/Cys-289, Cys-297/Cys-428, Cys-340/Cys-356, Cys-348/Cys-417, Cys-442/Cys-516, Cys-474/Cys-490, and Cys-506/Cys-534. Residues 39 to 49 (RDEQTQTTYQQ) form an important for binding to annexin A2 region. Residues 79 to 117 (PVRSCSEPRCFNGGTCQQALYFSDFVCQCPDGFVGKRCD) enclose the EGF-like domain. 2 Kringle domains span residues 124-205 (CFEG…TPAC) and 213-294 (CYVG…MSPC). N-linked (GlcNAc...) asparagine glycosylation occurs at Asn-149. The region spanning 309 to 558 (IKGGLFTDIT…YLNWIQDNMK (250 aa)) is the Peptidase S1 domain. Residues His-355 and Asp-404 each act as charge relay system in the active site. Asn-481 carries N-linked (GlcNAc...) asparagine glycosylation. Ser-510 serves as the catalytic Charge relay system.

Belongs to the peptidase S1 family. As to quaternary structure, heterodimer of chain A and chain B held by a disulfide bond. Binds to fibrin with high affinity. This interaction leads to an increase in the catalytic efficiency of the enzyme due to an increase in affinity for plasminogen. Similarly, binding to heparin increases the activation of plasminogen. Binds to annexin A2, cytokeratin-8, fibronectin and laminin. Binds to mannose receptor and the low-density lipoprotein receptor-related protein (LRP1); these proteins are involved in TPA clearance. Binds LRP1B; binding is followed by internalization and degradation. Forms heterodimer with SERPINA5. Interacts with SERPINE1. In complex with SERPINE1, interacts with SORL1. The single chain, almost fully active enzyme, can be further processed into a two-chain fully active form by a cleavage after Arg-308 catalyzed by plasmin, tissue kallikrein or factor Xa.

It localises to the secreted. It is found in the extracellular space. The catalysed reaction is Specific cleavage of Arg-|-Val bond in plasminogen to form plasmin.. Its activity is regulated as follows. Inhibited by SERPINA5. Inhibited by SERPINE1. Functionally, converts the abundant, but inactive, zymogen plasminogen to plasmin by hydrolyzing a single Arg-Val bond in plasminogen. By controlling plasmin-mediated proteolysis, it plays an important role in tissue remodeling and degradation, in cell migration and many other physiopathological events. During oocyte activation, plays a role in cortical granule reaction in the zona reaction, which contributes to the block to polyspermy. This Rattus norvegicus (Rat) protein is Tissue-type plasminogen activator (Plat).